Here is a 331-residue protein sequence, read N- to C-terminus: ADP-L-glycero-D-manno-heptose-6-epimerase (331 aa).

Residues 11-12 (FI), 32-33 (DN), Lys39, Lys54, 75-79 (EGACS), and Asn92 contribute to the NADP(+) site. The Proton acceptor role is filled by Tyr139. Residue Lys143 participates in NADP(+) binding. Residue Asn168 participates in substrate binding. Residues Val169 and Lys177 each coordinate NADP(+). The active-site Proton acceptor is the Lys177. Residues Arg179, His186, 200-203 (FGEY), Arg213, and Tyr292 each bind substrate.

It belongs to the NAD(P)-dependent epimerase/dehydratase family. HldD subfamily. Homopentamer. It depends on NADP(+) as a cofactor.

It catalyses the reaction ADP-D-glycero-beta-D-manno-heptose = ADP-L-glycero-beta-D-manno-heptose. It participates in nucleotide-sugar biosynthesis; ADP-L-glycero-beta-D-manno-heptose biosynthesis; ADP-L-glycero-beta-D-manno-heptose from D-glycero-beta-D-manno-heptose 7-phosphate: step 4/4. Functionally, catalyzes the interconversion between ADP-D-glycero-beta-D-manno-heptose and ADP-L-glycero-beta-D-manno-heptose via an epimerization at carbon 6 of the heptose. The sequence is that of ADP-L-glycero-D-manno-heptose-6-epimerase from Ralstonia nicotianae (strain ATCC BAA-1114 / GMI1000) (Ralstonia solanacearum).